A 185-amino-acid chain; its full sequence is Ribosome-recycling factor (185 aa).

Belongs to the RRF family.

It is found in the cytoplasm. Responsible for the release of ribosomes from messenger RNA at the termination of protein biosynthesis. May increase the efficiency of translation by recycling ribosomes from one round of translation to another. The chain is Ribosome-recycling factor from Shewanella amazonensis (strain ATCC BAA-1098 / SB2B).